Reading from the N-terminus, the 176-residue chain is Large ribosomal subunit protein uL6 (176 aa).

This sequence belongs to the universal ribosomal protein uL6 family. Part of the 50S ribosomal subunit.

Its function is as follows. This protein binds to the 23S rRNA, and is important in its secondary structure. It is located near the subunit interface in the base of the L7/L12 stalk, and near the tRNA binding site of the peptidyltransferase center. The polypeptide is Large ribosomal subunit protein uL6 (Lacticaseibacillus paracasei (strain ATCC 334 / BCRC 17002 / CCUG 31169 / CIP 107868 / KCTC 3260 / NRRL B-441) (Lactobacillus paracasei)).